A 339-amino-acid polypeptide reads, in one-letter code: MQGRLEDGVVHLPGDARQRFHDSRGYGRPTGGDDLEVAPVEAAHLLSRDDIDGVDGMGLRELLARTGTTLDFVVYKDLRDRGFYLSPAREGWPGVADAADADFLVYPRGKGPWDGEVEHRVRVVGERESIPVSSLGEVVLAIVDEDGDLTYFDTEGDDPEGTAAEDLPADLDAELLSDRALVWDGVDRLYQRGFFGQRLYGRNADSGPLQLSLLEAAYLARADALAIDEADVVSRGRDVEGDRFDRRLAVYAALREAKTVPKSGFKFGSDFRVYTEFESVDDLSHSEFLVRVVAPDHTFVPRDLSLDVRLAGGVRKRMVFALTDDNGEIDWLSVSRLTP.

Catalysis depends on residues Tyr274, His285, and Lys316.

This sequence belongs to the tRNA-intron endonuclease family. Archaeal long subfamily. As to quaternary structure, homodimer. Ca(2+) is required as a cofactor. Requires Mg(2+) as cofactor. The N-terminus is blocked.

It catalyses the reaction pretRNA = a 3'-half-tRNA molecule with a 5'-OH end + a 5'-half-tRNA molecule with a 2',3'-cyclic phosphate end + an intron with a 2',3'-cyclic phosphate and a 5'-hydroxyl terminus.. Endonuclease that removes tRNA introns. Cleaves pre-tRNA at the 5'- and 3'-splice sites to release the intron. The products are an intron and two tRNA half-molecules bearing 2',3' cyclic phosphate and 5'-OH termini. Recognizes a pseudosymmetric substrate in which 2 bulged loops of 3 bases are separated by a stem of 4 bp. The protein is tRNA-splicing endonuclease of Haloferax volcanii (strain ATCC 29605 / DSM 3757 / JCM 8879 / NBRC 14742 / NCIMB 2012 / VKM B-1768 / DS2) (Halobacterium volcanii).